Reading from the N-terminus, the 301-residue chain is Light-independent protochlorophyllide reductase iron-sulfur ATP-binding protein (301 aa).

The segment covering methionine 1–proline 13 has biased composition (low complexity). A disordered region spans residues methionine 1 to serine 21. ATP-binding positions include glycine 45–threonine 50 and lysine 74. Serine 49 lines the Mg(2+) pocket. [4Fe-4S] cluster-binding residues include cysteine 130 and cysteine 164. ATP is bound by residues asparagine 215 to arginine 216 and proline 239 to leucine 241.

Belongs to the NifH/BchL/ChlL family. As to quaternary structure, homodimer. Protochlorophyllide reductase is composed of three subunits; BchL, BchN and BchB. The cofactor is [4Fe-4S] cluster.

It catalyses the reaction chlorophyllide a + oxidized 2[4Fe-4S]-[ferredoxin] + 2 ADP + 2 phosphate = protochlorophyllide a + reduced 2[4Fe-4S]-[ferredoxin] + 2 ATP + 2 H2O. The protein operates within porphyrin-containing compound metabolism; bacteriochlorophyll biosynthesis (light-independent). In terms of biological role, component of the dark-operative protochlorophyllide reductase (DPOR) that uses Mg-ATP and reduced ferredoxin to reduce ring D of protochlorophyllide (Pchlide) to form chlorophyllide a (Chlide). This reaction is light-independent. The L component serves as a unique electron donor to the NB-component of the complex, and binds Mg-ATP. The polypeptide is Light-independent protochlorophyllide reductase iron-sulfur ATP-binding protein (Bradyrhizobium sp. (strain BTAi1 / ATCC BAA-1182)).